A 380-amino-acid polypeptide reads, in one-letter code: Glucose-1-phosphate adenylyltransferase (380 aa).

Alpha-D-glucose 1-phosphate contacts are provided by residues Gly164, Glu179–Lys180, and Ser190.

It belongs to the bacterial/plant glucose-1-phosphate adenylyltransferase family. In terms of assembly, homotetramer.

It carries out the reaction alpha-D-glucose 1-phosphate + ATP + H(+) = ADP-alpha-D-glucose + diphosphate. It participates in glycan biosynthesis; glycogen biosynthesis. Functionally, involved in the biosynthesis of ADP-glucose, a building block required for the elongation reactions to produce glycogen. Catalyzes the reaction between ATP and alpha-D-glucose 1-phosphate (G1P) to produce pyrophosphate and ADP-Glc. This chain is Glucose-1-phosphate adenylyltransferase, found in Streptococcus pneumoniae (strain Hungary19A-6).